Here is a 630-residue protein sequence, read N- to C-terminus: Biosynthetic arginine decarboxylase (630 aa).

Residue Lys-99 is modified to N6-(pyridoxal phosphate)lysine. 279–289 (FDVGGGLGVDY) contacts substrate.

This sequence belongs to the Orn/Lys/Arg decarboxylase class-II family. SpeA subfamily. It depends on Mg(2+) as a cofactor. Requires pyridoxal 5'-phosphate as cofactor.

It carries out the reaction L-arginine + H(+) = agmatine + CO2. The protein operates within amine and polyamine biosynthesis; agmatine biosynthesis; agmatine from L-arginine: step 1/1. In terms of biological role, catalyzes the biosynthesis of agmatine from arginine. This Neisseria meningitidis serogroup B (strain ATCC BAA-335 / MC58) protein is Biosynthetic arginine decarboxylase.